Reading from the N-terminus, the 330-residue chain is Lipoyl synthase (330 aa).

[4Fe-4S] cluster-binding residues include Cys-55, Cys-60, Cys-66, Cys-81, Cys-85, Cys-88, and Ser-292. Residues 67–281 (WEDREATFLI…AEEAREIGFV (215 aa)) form the Radical SAM core domain.

It belongs to the radical SAM superfamily. Lipoyl synthase family. [4Fe-4S] cluster is required as a cofactor.

The protein resides in the cytoplasm. It catalyses the reaction [[Fe-S] cluster scaffold protein carrying a second [4Fe-4S](2+) cluster] + N(6)-octanoyl-L-lysyl-[protein] + 2 oxidized [2Fe-2S]-[ferredoxin] + 2 S-adenosyl-L-methionine + 4 H(+) = [[Fe-S] cluster scaffold protein] + N(6)-[(R)-dihydrolipoyl]-L-lysyl-[protein] + 4 Fe(3+) + 2 hydrogen sulfide + 2 5'-deoxyadenosine + 2 L-methionine + 2 reduced [2Fe-2S]-[ferredoxin]. It functions in the pathway protein modification; protein lipoylation via endogenous pathway; protein N(6)-(lipoyl)lysine from octanoyl-[acyl-carrier-protein]: step 2/2. Its function is as follows. Catalyzes the radical-mediated insertion of two sulfur atoms into the C-6 and C-8 positions of the octanoyl moiety bound to the lipoyl domains of lipoate-dependent enzymes, thereby converting the octanoylated domains into lipoylated derivatives. This Cutibacterium acnes (strain DSM 16379 / KPA171202) (Propionibacterium acnes) protein is Lipoyl synthase.